The primary structure comprises 273 residues: Eukaryotic translation initiation factor 3 subunit G-2 (273 aa).

In terms of domain architecture, RRM spans 193-271 (SAVRISNLSE…LILCVEWSKP (79 aa)).

This sequence belongs to the eIF-3 subunit G family. Component of the eukaryotic translation initiation factor 3 (eIF-3) complex. The eIF-3 complex interacts with pix.

The protein localises to the cytoplasm. Its function is as follows. RNA-binding component of the eukaryotic translation initiation factor 3 (eIF-3) complex, which is involved in protein synthesis of a specialized repertoire of mRNAs and, together with other initiation factors, stimulates binding of mRNA and methionyl-tRNAi to the 40S ribosome. The eIF-3 complex specifically targets and initiates translation of a subset of mRNAs involved in cell proliferation. This subunit can bind 18S rRNA. In Drosophila melanogaster (Fruit fly), this protein is Eukaryotic translation initiation factor 3 subunit G-2.